The primary structure comprises 434 residues: Enolase (434 aa).

Gln163 is a binding site for (2R)-2-phosphoglycerate. Glu205 (proton donor) is an active-site residue. 3 residues coordinate Mg(2+): Asp242, Glu289, and Asp316. Lys341, Arg370, Ser371, and Lys392 together coordinate (2R)-2-phosphoglycerate. The active-site Proton acceptor is the Lys341.

This sequence belongs to the enolase family. It depends on Mg(2+) as a cofactor.

It localises to the cytoplasm. It is found in the secreted. Its subcellular location is the cell surface. The catalysed reaction is (2R)-2-phosphoglycerate = phosphoenolpyruvate + H2O. The protein operates within carbohydrate degradation; glycolysis; pyruvate from D-glyceraldehyde 3-phosphate: step 4/5. Its function is as follows. Catalyzes the reversible conversion of 2-phosphoglycerate (2-PG) into phosphoenolpyruvate (PEP). It is essential for the degradation of carbohydrates via glycolysis. This chain is Enolase, found in Lacticaseibacillus paracasei (strain ATCC 334 / BCRC 17002 / CCUG 31169 / CIP 107868 / KCTC 3260 / NRRL B-441) (Lactobacillus paracasei).